A 452-amino-acid chain; its full sequence is THO complex subunit 5A (452 aa).

The protein belongs to the THOC5 family. Component of the THO complex, which is composed of THO1, THO2, THO3, THO5, THO6 and THO7.

It localises to the nucleus. Acts as a component of the THO subcomplex of the TREX complex which is thought to couple mRNA transcription, processing and nuclear export. This chain is THO complex subunit 5A (THO5A), found in Arabidopsis thaliana (Mouse-ear cress).